Reading from the N-terminus, the 174-residue chain is Gamma-crystallin E (174 aa).

Beta/gamma crystallin 'Greek key' domains lie at 2 to 40 (GKITFYEDRGFQGRHYECSTDHSNLQPYFSRCNSVRVDS) and 41 to 83 (GCWM…RLIP). The tract at residues 84 to 87 (HSSS) is connecting peptide. Beta/gamma crystallin 'Greek key' domains lie at 88 to 128 (HRIR…HVME) and 129 to 171 (GYWV…RRIM).

It belongs to the beta/gamma-crystallin family. In terms of tissue distribution, detected in the superior olivary complex and fibers of the ventral aoustic stria of the auditory hindbrain.

In terms of biological role, crystallins are the dominant structural components of the vertebrate eye lens. The chain is Gamma-crystallin E (Cryge) from Rattus norvegicus (Rat).